We begin with the raw amino-acid sequence, 441 residues long: Putative F-box protein At1g33530 (441 aa).

The F-box domain occupies 91 to 137 (TTLAVELPDVLVEEILQRLPVKYLVRLKSISKGWKSLIESDHLAEKH).

The protein is Putative F-box protein At1g33530 of Arabidopsis thaliana (Mouse-ear cress).